We begin with the raw amino-acid sequence, 183 residues long: Ferritin heavy chain (183 aa).

Position 1 is an N-acetylmethionine (Met1). Thr2 carries the N-acetylthreonine; in Ferritin heavy chain, N-terminally processed modification. A Ferritin-like diiron domain is found at 11–160 (QNYHQDSEAA…DHVTNLRKMG (150 aa)). Fe cation-binding residues include Glu28, Glu63, His66, Glu108, and Gln142. Residues Ser179 and Ser183 each carry the phosphoserine modification.

This sequence belongs to the ferritin family. In terms of assembly, oligomer of 24 subunits. There are two types of subunits: L (light) chain and H (heavy) chain. The major chain can be light or heavy, depending on the species and tissue type. The functional molecule forms a roughly spherical shell with a diameter of 12 nm and contains a central cavity into which the insoluble mineral iron core is deposited. Interacts with NCOA4; NCOA4 promotes targeting of the iron-binding ferritin complex to autolysosomes following starvation or iron depletion.

Its subcellular location is the cytoplasm. The protein resides in the lysosome. The protein localises to the cytoplasmic vesicle. It is found in the autophagosome. The catalysed reaction is 4 Fe(2+) + O2 + 4 H(+) = 4 Fe(3+) + 2 H2O. Functionally, stores iron in a soluble, non-toxic, readily available form. Important for iron homeostasis. Has ferroxidase activity. Iron is taken up in the ferrous form and deposited as ferric hydroxides after oxidation. Also plays a role in delivery of iron to cells. Mediates iron uptake in capsule cells of the developing kidney. Delivery to lysosomes is mediated by the cargo receptor NCOA4 for autophagic degradation and release of iron. In Felis catus (Cat), this protein is Ferritin heavy chain (FTH1).